The following is a 437-amino-acid chain: Mannan endo-1,4-beta-mannosidase A (437 aa).

The first 19 residues, 1–19 (MMMLSKSLLSAATAASALA), serve as a signal peptide directing secretion. A propeptide spanning residues 20–27 (AVLQPVPR) is cleaved from the precursor. The tract at residues 28–376 (ASSFVTISGT…VDAINGGTTT (349 aa)) is catalytic. A disulfide bond links C53 and C56. 2 N-linked (GlcNAc...) asparagine glycosylation sites follow: N157 and N184. The active-site Proton donor/acceptor is the E196. Residue 196 to 198 (EPR) coordinates substrate. The cysteines at positions 199 and 202 are disulfide-linked. Substrate-binding residues include E232 and W274. N-linked (GlcNAc...) asparagine glycosylation occurs at N277. An intrachain disulfide couples C292 to C299. The active-site Nucleophile is the E303. C311 and C361 form a disulfide bridge. N355 is a glycosylation site (N-linked (GlcNAc...) asparagine). Residues 372–399 (GGTTTPPPVSSTTTTSSRTSSTPPPPGG) are disordered. A linker region spans residues 377–399 (PPPVSSTTTTSSRTSSTPPPPGG). Residues 381 to 392 (SSTTTTSSRTSS) show a composition bias toward low complexity. Residues 400–435 (SCSPLYGQCGGSGYTGPTCCAQGTCIYSNYWYSQCL) form the CBM1 domain.

Belongs to the glycosyl hydrolase 5 (cellulase A) family. As to quaternary structure, monomer.

It localises to the secreted. The catalysed reaction is Random hydrolysis of (1-&gt;4)-beta-D-mannosidic linkages in mannans, galactomannans and glucomannans.. Its function is as follows. Endo-1,4-mannanase that catalyzes the random hydrolysis of (1-&gt;4)-beta-D-mannosidic linkages in mannans and heteromannans. It is a crucial enzyme for depolymerization of seed galactomannans and wood galactoglucomannans. Active against locust bean gum and ivory nut mannan, releasing mainly tri- and disaccharides. Also has transglycosylation activity. Transglycosylation of two mannotrioses into a mannohexaose is the major transglycosylation route. The protein is Mannan endo-1,4-beta-mannosidase A of Hypocrea jecorina (strain ATCC 56765 / BCRC 32924 / NRRL 11460 / Rut C-30) (Trichoderma reesei).